A 420-amino-acid chain; its full sequence is Histidine--tRNA ligase (420 aa).

Belongs to the class-II aminoacyl-tRNA synthetase family. As to quaternary structure, homodimer.

The protein resides in the cytoplasm. The enzyme catalyses tRNA(His) + L-histidine + ATP = L-histidyl-tRNA(His) + AMP + diphosphate + H(+). The protein is Histidine--tRNA ligase of Mycobacterium marinum (strain ATCC BAA-535 / M).